The following is a 201-amino-acid chain: Large ribosomal subunit protein uL4 (201 aa).

Positions 45–66 (AQLTRSEVSGGGKKPWRQKGTG) are disordered.

This sequence belongs to the universal ribosomal protein uL4 family. In terms of assembly, part of the 50S ribosomal subunit.

In terms of biological role, one of the primary rRNA binding proteins, this protein initially binds near the 5'-end of the 23S rRNA. It is important during the early stages of 50S assembly. It makes multiple contacts with different domains of the 23S rRNA in the assembled 50S subunit and ribosome. Its function is as follows. Forms part of the polypeptide exit tunnel. This Aeromonas hydrophila subsp. hydrophila (strain ATCC 7966 / DSM 30187 / BCRC 13018 / CCUG 14551 / JCM 1027 / KCTC 2358 / NCIMB 9240 / NCTC 8049) protein is Large ribosomal subunit protein uL4.